The primary structure comprises 43 residues: Potassium channel toxin gamma-KTx 4.6 (43 aa).

4 disulfide bridges follow: Cys5-Cys23, Cys11-Cys34, Cys20-Cys39, and Cys24-Cys41.

The protein belongs to the ergtoxin family. Gamma-KTx 4 subfamily. As to expression, expressed by the venom gland.

Its subcellular location is the secreted. Reversibly blocks Kv11/ERG potassium channels. The polypeptide is Potassium channel toxin gamma-KTx 4.6 (Centruroides limpidus (Mexican scorpion)).